The sequence spans 766 residues: DNA ligase (766 aa).

Residues 1–30 (MSTVNAKGAKPATDANGQSLNPEEPSEALR) form a disordered region. NAD(+) contacts are provided by residues 57–61 (DAEYD), 106–107 (SL), and glutamate 141. The N6-AMP-lysine intermediate role is filled by lysine 143. Residues arginine 164, glutamate 201, lysine 317, and lysine 341 each contribute to the NAD(+) site. The Zn(2+) site is built by cysteine 435, cysteine 438, cysteine 454, and cysteine 460. The 90-residue stretch at 669–758 (STPRTLEGVT…PEAFGDRADA (90 aa)) folds into the BRCT domain. Residues 747 to 766 (QGPEAFGDRADAADQPAAGE) are disordered.

Belongs to the NAD-dependent DNA ligase family. LigA subfamily. The cofactor is Mg(2+). Mn(2+) is required as a cofactor.

The enzyme catalyses NAD(+) + (deoxyribonucleotide)n-3'-hydroxyl + 5'-phospho-(deoxyribonucleotide)m = (deoxyribonucleotide)n+m + AMP + beta-nicotinamide D-nucleotide.. Its function is as follows. DNA ligase that catalyzes the formation of phosphodiester linkages between 5'-phosphoryl and 3'-hydroxyl groups in double-stranded DNA using NAD as a coenzyme and as the energy source for the reaction. It is essential for DNA replication and repair of damaged DNA. In Kocuria rhizophila (strain ATCC 9341 / DSM 348 / NBRC 103217 / DC2201), this protein is DNA ligase.